A 95-amino-acid chain; its full sequence is Aspartyl/glutamyl-tRNA(Asn/Gln) amidotransferase subunit C (95 aa).

It belongs to the GatC family. As to quaternary structure, heterotrimer of A, B and C subunits.

It catalyses the reaction L-glutamyl-tRNA(Gln) + L-glutamine + ATP + H2O = L-glutaminyl-tRNA(Gln) + L-glutamate + ADP + phosphate + H(+). The enzyme catalyses L-aspartyl-tRNA(Asn) + L-glutamine + ATP + H2O = L-asparaginyl-tRNA(Asn) + L-glutamate + ADP + phosphate + 2 H(+). In terms of biological role, allows the formation of correctly charged Asn-tRNA(Asn) or Gln-tRNA(Gln) through the transamidation of misacylated Asp-tRNA(Asn) or Glu-tRNA(Gln) in organisms which lack either or both of asparaginyl-tRNA or glutaminyl-tRNA synthetases. The reaction takes place in the presence of glutamine and ATP through an activated phospho-Asp-tRNA(Asn) or phospho-Glu-tRNA(Gln). The polypeptide is Aspartyl/glutamyl-tRNA(Asn/Gln) amidotransferase subunit C (Azoarcus sp. (strain BH72)).